The chain runs to 218 residues: Small ribosomal subunit protein uS3c (218 aa).

Residues 47–118 (VQKNIRISSG…KLNIAITRIS (72 aa)) enclose the KH type-2 domain.

The protein belongs to the universal ribosomal protein uS3 family. In terms of assembly, part of the 30S ribosomal subunit.

It is found in the plastid. It localises to the chloroplast. The protein is Small ribosomal subunit protein uS3c (rps3) of Lepidium virginicum (Virginia pepperweed).